The primary structure comprises 358 residues: DNA primase large subunit PriL (358 aa).

Residues C234, C306, C315, and C322 each coordinate [4Fe-4S] cluster. A disordered region spans residues 335-358; the sequence is KLDDTDEEELVDWREDEGEEEADA. Residues 338–358 show a composition bias toward acidic residues; the sequence is DTDEEELVDWREDEGEEEADA.

The protein belongs to the eukaryotic-type primase large subunit family. Heterodimer of a small subunit (PriS) and a large subunit (PriL). [4Fe-4S] cluster serves as cofactor.

Regulatory subunit of DNA primase, an RNA polymerase that catalyzes the synthesis of short RNA molecules used as primers for DNA polymerase during DNA replication. Stabilizes and modulates the activity of the small subunit, increasing the rate of DNA synthesis, and conferring RNA synthesis capability. The DNA polymerase activity may enable DNA primase to also catalyze primer extension after primer synthesis. May also play a role in DNA repair. The protein is DNA primase large subunit PriL of Haloarcula marismortui (strain ATCC 43049 / DSM 3752 / JCM 8966 / VKM B-1809) (Halobacterium marismortui).